Consider the following 113-residue polypeptide: Putative insulin-like growth factor 2-associated protein (113 aa).

Expressed in fetal and adult liver.

The polypeptide is Putative insulin-like growth factor 2-associated protein (Homo sapiens (Human)).